A 310-amino-acid polypeptide reads, in one-letter code: Glutaminase (310 aa).

Substrate contacts are provided by S66, N117, E161, N168, Y192, Y244, and V262.

This sequence belongs to the glutaminase family. As to quaternary structure, homotetramer.

It catalyses the reaction L-glutamine + H2O = L-glutamate + NH4(+). This Shigella boydii serotype 4 (strain Sb227) protein is Glutaminase.